A 432-amino-acid polypeptide reads, in one-letter code: Cytoplasmic 60S subunit biogenesis factor REH1 (432 aa).

The C2H2-type 1 zinc-finger motif lies at F6–H30. The segment at Q79 to S150 is disordered. Residues K86 to K98 are compositionally biased toward basic residues. The segment covering K105 to N117 has biased composition (basic and acidic residues). Positions R118–D143 are enriched in polar residues. 2 consecutive C2H2-type zinc fingers follow at residues T186 to H209 and H237 to H261.

This sequence belongs to the REI1 family. Associates with nascent pre-60S particles that have not yet entered the translating pool, and is released from mature 60S subunits. Interacts with pre-60S factors NMD3, LSG1, and TIF6.

The protein resides in the cytoplasm. Its function is as follows. Pre-60S-associated cytoplasmic factor involved in the cytoplasmic maturation of the 60S subunit. May act redundantly with REI1 to directly promote a stabilizing structural rearrangement in cytoplasmic 60S subunit maturation independent on the REI1-specific ARX1 recycling. The chain is Cytoplasmic 60S subunit biogenesis factor REH1 (REH1) from Saccharomyces cerevisiae (strain ATCC 204508 / S288c) (Baker's yeast).